The following is a 1258-amino-acid chain: Cohesin subunit SA-1 (1258 aa).

The segment at Met1–Pro84 is disordered. The segment covering Gln10–His19 has biased composition (polar residues). Ser24 carries the phosphoserine modification. A compositionally biased stretch (basic and acidic residues) spans Ser53–Ala62. The SCD domain maps to Phe296–Met381. Residues Ser756, Ser1062, and Ser1065 each carry the phosphoserine modification. 2 disordered regions span residues Gly1055–Asn1096 and Met1129–His1148. Over residues Ser1062–Ser1074 the composition is skewed to low complexity. The segment covering Arg1076–Lys1087 has biased composition (basic residues). Ser1093 bears the Phosphoserine mark. The span at Glu1137–Phe1146 shows a compositional bias: basic and acidic residues. Lys1161 is covalently cross-linked (Glycyl lysine isopeptide (Lys-Gly) (interchain with G-Cter in SUMO2)).

Belongs to the SCC3 family. Cohesin complexes are composed of a heterodimer between a SMC1 protein (SMC1A or SMC1B) and SMC3, which are attached via their hinge domain, and RAD21 which link them at their heads, and one STAG protein (STAG1, STAG2 or STAG3). In cohesin complexes, STAG1 is mutually exclusive with STAG2 and STAG3. Interacts directly with RAD21 in cohesin complex. The cohesin complex interacts with the cohesin loading complex subunits NIPBL/Scc2 (via HEAT repeats) and MAU2/Scc4. NIPBL directly contacts all members of the complex, RAD21, SMC1A/B, SMC3 and STAG1. In terms of processing, phosphorylated by PLK1. The large dissociation of cohesin from chromosome arms during prophase is partly due to its phosphorylation.

It is found in the nucleus. Its subcellular location is the chromosome. It localises to the centromere. Functionally, component of cohesin complex, a complex required for the cohesion of sister chromatids after DNA replication. The cohesin complex apparently forms a large proteinaceous ring within which sister chromatids can be trapped. At anaphase, the complex is cleaved and dissociates from chromatin, allowing sister chromatids to segregate. The cohesin complex may also play a role in spindle pole assembly during mitosis. This Homo sapiens (Human) protein is Cohesin subunit SA-1 (STAG1).